Reading from the N-terminus, the 484-residue chain is Zinc metalloproteinase/disintegrin PMMP-2 (484 aa).

The N-terminal stretch at 1-20 (MIQVLLVTICLAVFPYQGSS) is a signal peptide. A propeptide spanning residues 21-190 (IILESGNVDD…KASQLNLTPL (170 aa)) is cleaved from the precursor. The 199-residue stretch at 197-395 (RYVKLAIVVD…YNPQCILNAP (199 aa)) folds into the Peptidase M12B domain. An N-linked (GlcNAc...) asparagine glycan is attached at Asn239. Intrachain disulfides connect Cys308/Cys390, Cys352/Cys374, and Cys354/Cys357. His333 contacts Zn(2+). Glu334 is a catalytic residue. Zn(2+) contacts are provided by His337 and His343. Positions 396–413 (LRTDTVSTPVSGNEFLEA) are excised as a propeptide. In terms of domain architecture, Disintegrin spans 403–484 (TPVSGNEFLE…ADCPRNGLYG (82 aa)). Intrachain disulfides connect Cys417–Cys432, Cys419–Cys427, Cys426–Cys449, Cys440–Cys446, Cys445–Cys470, and Cys458–Cys477. Positions 462-464 (RGD) match the Cell attachment site motif.

Belongs to the venom metalloproteinase (M12B) family. P-II subfamily. P-IIa sub-subfamily. As to quaternary structure, monomer. The cofactor is Zn(2+). As to expression, expressed by the venom gland.

It localises to the secreted. Impairs hemostasis in the envenomed animal. Functionally, inhibits platelet aggregation induced by ADP, thrombin, platelet-activating factor and collagen. Acts by inhibiting fibrinogen interaction with platelet receptors GPIIb/GPIIIa (ITGA2B/ITGB3). The sequence is that of Zinc metalloproteinase/disintegrin PMMP-2 from Protobothrops mucrosquamatus (Taiwan habu).